A 262-amino-acid polypeptide reads, in one-letter code: Ribosome-recycling factor, mitochondrial (262 aa).

The N-terminal 55 residues, 1–55 (MALGLRCFRLVHPAFCNSLAALTRPVSEVTLQTVRGRQNDHGQCMAYAAVPVRHF), are a transit peptide targeting the mitochondrion.

Belongs to the RRF family.

The protein resides in the mitochondrion. Functionally, responsible for the disassembly of ribosomes from messenger RNA at the termination of mitochondrial protein biosynthesis. Acts in collaboration with GFM2. Promotes mitochondrial ribosome recycling by dissolution of intersubunit contacts. This chain is Ribosome-recycling factor, mitochondrial (MRRF), found in Bos taurus (Bovine).